Consider the following 106-residue polypeptide: Thioredoxin (106 aa).

An N6-acetyllysine modification is found at Lys-3. The region spanning 3–106 is the Thioredoxin domain; sequence KQIESKTAFQ…KLEATINELV (104 aa). An N6-succinyllysine modification is found at Lys-8. Active-site nucleophile residues include Cys-32 and Cys-35. An intrachain disulfide couples Cys-32 to Cys-35. N6-acetyllysine is present on Lys-39. S-nitrosocysteine occurs at positions 62 and 69. Cys-73 bears the S-nitrosocysteine; alternate mark. Position 95 is an N6-acetyllysine; alternate (Lys-95). An N6-succinyllysine; alternate modification is found at Lys-95.

It belongs to the thioredoxin family. Homodimer; disulfide-linked. Interacts with TXNIP through the redox-active site. Interacts with MAP3K5 and CASP3. Interacts with APEX1; the interaction stimulates the FOS/JUN AP-1 DNA-binding activity in a redox-dependent manner. In the fully reduced protein, both Cys-69 and Cys-73 are nitrosylated in response to nitric oxide (NO). When two disulfide bonds are present in the protein, only Cys-73 is nitrosylated. Cys-73 can serve as donor for nitrosylation of target proteins.

Its subcellular location is the nucleus. The protein localises to the cytoplasm. The protein resides in the secreted. Participates in various redox reactions through the reversible oxidation of its active center dithiol to a disulfide and catalyzes dithiol-disulfide exchange reactions. Plays a role in the reversible S-nitrosylation of cysteine residues in target proteins, and thereby contributes to the response to intracellular nitric oxide. Nitrosylates the active site Cys of CASP3 in response to nitric oxide (NO), and thereby inhibits caspase-3 activity. Induces the FOS/JUN AP-1 DNA binding activity in ionizing radiation (IR) cells through its oxidation/reduction status and stimulates AP-1 transcriptional activity. This Pongo abelii (Sumatran orangutan) protein is Thioredoxin (TXN).